The sequence spans 350 residues: Transcriptional activator hacA (350 aa).

Residues 1–118 (MKSADRFSPV…RLEMEKLESE (118 aa)) are disordered. The segment covering 35–47 (PADTSLQTKNVVA) has biased composition (polar residues). Composition is skewed to basic and acidic residues over residues 81–95 (KTED…ERVL) and 104–118 (SRER…LESE). Residues 87–150 (EQRRIERVLR…NRLSQQVAQL (64 aa)) enclose the bZIP domain. Residues 89 to 142 (RRIERVLRNRAAAQTSRERKRLEMEKLESEKIDMEQQNQFLLQRLAQMEAENNR) form a basic motif region. The segment at 143 to 150 (LSQQVAQL) is leucine-zipper. 3 disordered regions span residues 152–175 (AEVR…PTLT), 194–218 (PTPS…DLTQ), and 328–350 (SLQP…AGSA). The span at 160–175 (STPTSSSPASVSPTLT) shows a compositional bias: low complexity. 2 stretches are compositionally biased toward polar residues: residues 196 to 211 (PSVT…SSLA) and 329 to 340 (LQPSHGASTSRC).

The protein belongs to the bZIP family. As to quaternary structure, homodimer.

The protein resides in the nucleus. Functionally, transcriptional activator involved in the unfolded protein response (UPR) pathway. Recognizes and binds to the UPR element (UPRE) in the promoter of UPR-regulated genes. Increases the synthesis of endoplasmic reticulum-resident proteins required for protein folding as well as components of the secretory pathway. This Emericella nidulans (strain FGSC A4 / ATCC 38163 / CBS 112.46 / NRRL 194 / M139) (Aspergillus nidulans) protein is Transcriptional activator hacA (hacA).